We begin with the raw amino-acid sequence, 315 residues long: Homoserine kinase (315 aa).

97-107 (PPARGLGSSAT) contributes to the ATP binding site.

The protein belongs to the GHMP kinase family. Homoserine kinase subfamily.

The protein localises to the cytoplasm. The catalysed reaction is L-homoserine + ATP = O-phospho-L-homoserine + ADP + H(+). It functions in the pathway amino-acid biosynthesis; L-threonine biosynthesis; L-threonine from L-aspartate: step 4/5. Its function is as follows. Catalyzes the ATP-dependent phosphorylation of L-homoserine to L-homoserine phosphate. This Synechococcus sp. (strain CC9902) protein is Homoserine kinase.